A 101-amino-acid polypeptide reads, in one-letter code: Large ribosomal subunit protein uL24 (101 aa).

The protein belongs to the universal ribosomal protein uL24 family. As to quaternary structure, part of the 50S ribosomal subunit.

In terms of biological role, one of two assembly initiator proteins, it binds directly to the 5'-end of the 23S rRNA, where it nucleates assembly of the 50S subunit. Its function is as follows. One of the proteins that surrounds the polypeptide exit tunnel on the outside of the subunit. This chain is Large ribosomal subunit protein uL24, found in Borreliella afzelii (strain PKo) (Borrelia afzelii).